A 486-amino-acid polypeptide reads, in one-letter code: Bifunctional protein GlmU (486 aa).

Residues 1–236 (MTDQNLAIVV…SWLVDGINDR (236 aa)) form a pyrophosphorylase region. UDP-N-acetyl-alpha-D-glucosamine contacts are provided by residues 11 to 14 (LAAG), Lys25, Gln78, and 83 to 84 (GT). Asp109 is a Mg(2+) binding site. 4 residues coordinate UDP-N-acetyl-alpha-D-glucosamine: Gly146, Glu161, Asn176, and Asn234. Asn234 contributes to the Mg(2+) binding site. The linker stretch occupies residues 237 to 257 (AQLSEAAAKLNALTVRAWQLA). The N-acetyltransferase stretch occupies residues 258–486 (GVTVQDPATT…ASNAAEESGE (229 aa)). Arg339 and Lys357 together coordinate UDP-N-acetyl-alpha-D-glucosamine. The active-site Proton acceptor is the His369. 2 residues coordinate UDP-N-acetyl-alpha-D-glucosamine: Tyr372 and Asn383. Acetyl-CoA contacts are provided by residues Ala386, 392-393 (NY), and Ala429. Positions 459-486 (RRPGTDAARAAQRNGAAEASNAAEESGE) are disordered. The span at 465–486 (AARAAQRNGAAEASNAAEESGE) shows a compositional bias: low complexity.

It in the N-terminal section; belongs to the N-acetylglucosamine-1-phosphate uridyltransferase family. This sequence in the C-terminal section; belongs to the transferase hexapeptide repeat family. As to quaternary structure, homotrimer. It depends on Mg(2+) as a cofactor.

Its subcellular location is the cytoplasm. The enzyme catalyses alpha-D-glucosamine 1-phosphate + acetyl-CoA = N-acetyl-alpha-D-glucosamine 1-phosphate + CoA + H(+). It carries out the reaction N-acetyl-alpha-D-glucosamine 1-phosphate + UTP + H(+) = UDP-N-acetyl-alpha-D-glucosamine + diphosphate. It functions in the pathway nucleotide-sugar biosynthesis; UDP-N-acetyl-alpha-D-glucosamine biosynthesis; N-acetyl-alpha-D-glucosamine 1-phosphate from alpha-D-glucosamine 6-phosphate (route II): step 2/2. Its pathway is nucleotide-sugar biosynthesis; UDP-N-acetyl-alpha-D-glucosamine biosynthesis; UDP-N-acetyl-alpha-D-glucosamine from N-acetyl-alpha-D-glucosamine 1-phosphate: step 1/1. It participates in bacterial outer membrane biogenesis; LPS lipid A biosynthesis. Functionally, catalyzes the last two sequential reactions in the de novo biosynthetic pathway for UDP-N-acetylglucosamine (UDP-GlcNAc). The C-terminal domain catalyzes the transfer of acetyl group from acetyl coenzyme A to glucosamine-1-phosphate (GlcN-1-P) to produce N-acetylglucosamine-1-phosphate (GlcNAc-1-P), which is converted into UDP-GlcNAc by the transfer of uridine 5-monophosphate (from uridine 5-triphosphate), a reaction catalyzed by the N-terminal domain. The polypeptide is Bifunctional protein GlmU (Leifsonia xyli subsp. xyli (strain CTCB07)).